Reading from the N-terminus, the 462-residue chain is MILGPDGILNRDTRGDWVRLRTLILLRWMAVAGQLAAIVVTDWYLGVRLPMGLCFMAVGASVIANVIATFVFPQNRRLTEFQALMILLFDLTQLSFLLFLTGGLTNPFALLILAPVTISALALELRTTVILGAIAIGLLTFTAYFHLPLILADGSSLSVPRMFEFGFWLAIVIGILFLGLYSRRVAIEIRSMSDALLATQMALDREQKLTDLGGVVAAAAHELGTPLATIKLVSSELAEELSEQPALRDDAELIREQADRCRDILRSMGRAGKDDLQMRQAPLGEVLREAAEPHVGRGKRVEFDLYPSRGGDERQPVILRRPEVIHGLRNLIQNAVDFARSTVWIDGEWTGDRIAIRIVDDGEGYPPAIIGRIGDPFVRQRRAEESQSRRPGYEGMGLGLFIAKTLLERSGAELSFANAADPFLRSHERPERCGAIVEVIWPVDRLVVVRNAPLGENVLIQT.

Residues Met-1–Leu-25 lie on the Cytoplasmic side of the membrane. The helical transmembrane segment at Leu-26–Leu-45 threads the bilayer. Topologically, residues Gly-46–Met-51 are extracellular. Residues Gly-52–Phe-70 traverse the membrane as a helical segment. Over Val-71 to Leu-78 the chain is Cytoplasmic. The chain crosses the membrane as a helical span at residues Thr-79–Phe-96. At Leu-97 to Gly-103 the chain is on the extracellular side. Residues Leu-104–Leu-123 form a helical membrane-spanning segment. Residues Glu-124–Val-129 are Cytoplasmic-facing. Residues Ile-130–Leu-149 traverse the membrane as a helical segment. Residues Ile-150–Glu-164 are Extracellular-facing. A helical membrane pass occupies residues Phe-165–Ser-182. The Cytoplasmic segment spans residues Arg-183 to Thr-462. The Histidine kinase domain maps to Ala-218–Arg-445. Residue His-221 is modified to Phosphohistidine; by autocatalysis.

The protein resides in the cell inner membrane. The catalysed reaction is ATP + protein L-histidine = ADP + protein N-phospho-L-histidine.. Its function is as follows. Member of the two-component regulatory system RegB/RegA. Involved in the positive regulation of photosynthesis gene expression in response to anaerobiosis. Also involved in positive regulation of the cbbI and cbbII Calvin cycle CO2 fixation operons, as well as in regulation of expression of genes involved in alternative CO2 fixation pathways. Phosphorylates RegA/PrrA. The polypeptide is Sensor histidine kinase RegB (regB) (Cereibacter sphaeroides (strain ATCC 17023 / DSM 158 / JCM 6121 / CCUG 31486 / LMG 2827 / NBRC 12203 / NCIMB 8253 / ATH 2.4.1.) (Rhodobacter sphaeroides)).